The primary structure comprises 78 residues: Antitoxin FitA (78 aa).

Homodimer in the absence of FitB; forms a heterodimer with FitB; 4 FitAB heterodimers form a complex that binds to fitAB promoter DNA. The complex is also seen in solution.

Its function is as follows. Antitoxin component of a type II toxin-antitoxin (TA) system. Plays a role in the speed with which bacteria traverse human epithelial cells; disruption of the locus increases the speed of trafficking about 2-4-fold. Binds to its own promoter, binding affinity of the FitAB complex is 20-30-fold higher than FitA alone. No nuclease activity was observed for the FitAB complex, perhaps because FitA (the antitoxin) prevents metal binding and thus catalysis by FitB. The chain is Antitoxin FitA (fitA) from Neisseria gonorrhoeae (strain ATCC 700825 / FA 1090).